Reading from the N-terminus, the 341-residue chain is HTH-type transcriptional repressor CytR (341 aa).

Residues 10 to 64 enclose the HTH lacI-type domain; sequence ATMKDVALKAKVSTATVSRALMNPDKVSQATRNRVEKAAREVGYLPQPMGRNVKR. The H-T-H motif DNA-binding region spans 12 to 31; the sequence is MKDVALKAKVSTATVSRALM.

Functionally, this protein negatively controls the transcription initiation of genes such as deoCABD, udp, and cdd encoding catabolizing enzymes and nupC, nupG, and tsx encoding transporting and pore-forming proteins. Binds cytidine and adenosine as effectors. This is HTH-type transcriptional repressor CytR (cytR) from Escherichia coli (strain K12).